A 234-amino-acid polypeptide reads, in one-letter code: Transcriptional activator protein TraR (234 aa).

In terms of domain architecture, HTH luxR-type spans 167-232; that stretch reads TAEDAAWLDP…HLTALAIKRK (66 aa). The segment at residues 191 to 210 is a DNA-binding region (H-T-H motif); that stretch reads MEEIADVEEVKYNSVRVKLR.

The protein belongs to the autoinducer-regulated transcriptional regulatory protein family.

Functionally, positive regulation of conjugal transfer of Ti plasmids. The sequence is that of Transcriptional activator protein TraR (traR) from Agrobacterium vitis (Rhizobium vitis).